We begin with the raw amino-acid sequence, 452 residues long: Mannan endo-1,6-alpha-mannosidase DCW1 (452 aa).

The signal sequence occupies residues 1–18 (MKFSIYLIISLFSSFSHA). Asn-25, Asn-81, Asn-106, Asn-130, Asn-200, Asn-237, Asn-240, Asn-262, Asn-271, and Asn-286 each carry an N-linked (GlcNAc...) asparagine glycan. Gly-431 is lipidated: GPI-anchor amidated glycine. Residues 432–452 (AGIITAIIGASLVGSCVWLIL) constitute a propeptide, removed in mature form.

This sequence belongs to the glycosyl hydrolase 76 family.

It localises to the cell membrane. The enzyme catalyses Random hydrolysis of (1-&gt;6)-alpha-D-mannosidic linkages in unbranched (1-&gt;6)-mannans.. Functionally, probable mannosidase required for normal synthesis of the cell wall. In Candida albicans (strain SC5314 / ATCC MYA-2876) (Yeast), this protein is Mannan endo-1,6-alpha-mannosidase DCW1 (DCW1).